We begin with the raw amino-acid sequence, 127 residues long: Calcitonin receptor-stimulating peptide 2 (127 aa).

Positions 1-25 are cleaved as a signal peptide; sequence MGFWKLSPFLAIGLLVMYQAGILQA. Positions 26 to 81 are excised as a propeptide; it reads APFRSALENPLESATLTEDEICVLLTAVVKDYVQMKARELQQEQETEGSSLTAQKS. The interval 65 to 85 is disordered; sequence LQQEQETEGSSLTAQKSSCKD. Residues 72 to 81 are compositionally biased toward polar residues; it reads EGSSLTAQKS. Cysteines 83 and 88 form a disulfide.

Belongs to the calcitonin family.

The protein localises to the secreted. The sequence is that of Calcitonin receptor-stimulating peptide 2 (CRSP2) from Canis lupus familiaris (Dog).